The sequence spans 245 residues: 1-(5-phosphoribosyl)-5-[(5-phosphoribosylamino)methylideneamino] imidazole-4-carboxamide isomerase (245 aa).

Asp7 functions as the Proton acceptor in the catalytic mechanism. The active-site Proton donor is Asp129.

This sequence belongs to the HisA/HisF family.

The protein resides in the cytoplasm. It catalyses the reaction 1-(5-phospho-beta-D-ribosyl)-5-[(5-phospho-beta-D-ribosylamino)methylideneamino]imidazole-4-carboxamide = 5-[(5-phospho-1-deoxy-D-ribulos-1-ylimino)methylamino]-1-(5-phospho-beta-D-ribosyl)imidazole-4-carboxamide. The protein operates within amino-acid biosynthesis; L-histidine biosynthesis; L-histidine from 5-phospho-alpha-D-ribose 1-diphosphate: step 4/9. This is 1-(5-phosphoribosyl)-5-[(5-phosphoribosylamino)methylideneamino] imidazole-4-carboxamide isomerase from Shewanella frigidimarina (strain NCIMB 400).